The primary structure comprises 673 residues: UvrABC system protein B (673 aa).

The region spanning 25-413 is the Helicase ATP-binding domain; that stretch reads EGIESGLAHQ…GSDIAEQVVR (389 aa). 38–45 is a binding site for ATP; it reads GVTGSGKT. A Beta-hairpin motif is present at residues 91–114; it reads YYDYYQPEAYVPTTDTFIEKDASV. A Helicase C-terminal domain is found at 430–583; it reads QVDDLLSEIN…QHQYNLDNNI (154 aa). The UVR domain occupies 634–669; the sequence is DTKIVELEKLMQGHAQNLEFEQAAAMRDKIAKLRIQ.

Belongs to the UvrB family. Forms a heterotetramer with UvrA during the search for lesions. Interacts with UvrC in an incision complex.

It is found in the cytoplasm. Its function is as follows. The UvrABC repair system catalyzes the recognition and processing of DNA lesions. A damage recognition complex composed of 2 UvrA and 2 UvrB subunits scans DNA for abnormalities. Upon binding of the UvrA(2)B(2) complex to a putative damaged site, the DNA wraps around one UvrB monomer. DNA wrap is dependent on ATP binding by UvrB and probably causes local melting of the DNA helix, facilitating insertion of UvrB beta-hairpin between the DNA strands. Then UvrB probes one DNA strand for the presence of a lesion. If a lesion is found the UvrA subunits dissociate and the UvrB-DNA preincision complex is formed. This complex is subsequently bound by UvrC and the second UvrB is released. If no lesion is found, the DNA wraps around the other UvrB subunit that will check the other stand for damage. This Colwellia psychrerythraea (strain 34H / ATCC BAA-681) (Vibrio psychroerythus) protein is UvrABC system protein B.